The primary structure comprises 1123 residues: Rabphilin-1 (1123 aa).

The span at 1 to 17 shows a compositional bias: basic residues; that stretch reads MTKSTKLRHCKQKKKKP. Disordered regions lie at residues 1-56 and 88-140; these read MTKS…GSRS and SAHN…PSTH. The segment covering 36–46 has biased composition (low complexity); it reads DAATTTSTTDA. A RabBD domain is found at 215–341; sequence KAQTGSITAA…KKSGAWFYKE (127 aa). The segment at 263 to 328 adopts an FYVE-type zinc-finger fold; sequence GNGVTHCLLC…LCKICSEARE (66 aa). The Zn(2+) site is built by C269, C272, C288, C291, C296, C300, C320, and C323. 4 stretches are compositionally biased toward polar residues: residues 365–375, 387–400, 410–428, and 487–497; these read PNASSAATPLS, TMPS…TTPK, PGLQ…GTRR, and ASSSDGESFVQ. Disordered stretches follow at residues 365–710, 737–779, and 796–818; these read PNAS…VGSA, TSRA…LRTS, and HIVS…VPIP. Positions 531–541 are enriched in basic and acidic residues; the sequence is SRREANMERFS. Over residues 563–574 the composition is skewed to low complexity; sequence ESRPSTRSTSPR. Composition is skewed to polar residues over residues 605 to 632 and 649 to 666; these read VVQS…QQQA and PDRT…TSLV. Positions 742 to 753 are enriched in low complexity; sequence SPLAASSSFLSS. Basic and acidic residues predominate over residues 756–768; the sequence is DDTKQKNRRRDGV. A compositionally biased stretch (low complexity) spans 803–818; sequence TSSTTSNQNHTSVPIP. C2 domains are found at residues 844-967 and 984-1103; these read SLGS…NLYL and DRGK…RQWI. The Ca(2+) site is built by D875, D881, D936, D938, D943, D1015, D1021, D1075, D1077, and D1083.

It depends on Ca(2+) as a cofactor.

It is found in the synapse. Its function is as follows. Rab-3 effector. The chain is Rabphilin-1 (rbf-1) from Caenorhabditis elegans.